The sequence spans 140 residues: UPF0134 protein MPN_130 (140 aa).

It belongs to the UPF0134 family.

The polypeptide is UPF0134 protein MPN_130 (Mycoplasma pneumoniae (strain ATCC 29342 / M129 / Subtype 1) (Mycoplasmoides pneumoniae)).